The sequence spans 704 residues: ATP-dependent DNA helicase Hel308 (704 aa).

ATP contacts are provided by residues Gln31 and 49–56; that span reads SPTASGKT. Residues 36–200 enclose the Helicase ATP-binding domain; it reads RKGLLDGKRL…WLNAELVATN (165 aa). The short motif at 148–151 is the DEAH box element; it reads DEFH. Positions 235–439 constitute a Helicase C-terminal domain; sequence AIIAYTLDIV…AFYSFLISII (205 aa). The segment at 366-645 is binds Hjc; that stretch reads VVGYMDLIPV…LHARVKDGVK (280 aa). The required for helicase activity stretch occupies residues 432–644; that stretch reads YSFLISIIAS…ELHARVKDGV (213 aa). An inhibits intrinsic ATPase, and helicase region spans residues 646-704; that stretch reads PELIELVKIPGIGRVRARLLYQHDIKKPEDIVLNPEKVKQLLGPNLGEKIVREAARTIA.

This sequence belongs to the helicase family. Hel308 subfamily. Monomer; forms a 1:2 complex with Hjc, which may form a complex with Holliday junction DNA. Mg(2+) serves as cofactor.

It catalyses the reaction Couples ATP hydrolysis with the unwinding of duplex DNA by translocating in the 3'-5' direction.. The catalysed reaction is ATP + H2O = ADP + phosphate + H(+). The enzyme catalyses Couples ATP hydrolysis with the unwinding of duplex DNA at the replication fork by translocating in the 5'-3' direction. This creates two antiparallel DNA single strands (ssDNA). The leading ssDNA polymer is the template for DNA polymerase III holoenzyme which synthesizes a continuous strand.. Helicase activity is inhibited by Hjc and by PCNA123 and PCNA323. Its function is as follows. An ATP, Mg(2+)-dependent DNA 3'-5' and 5'-3' helicase that may be involved in repair of stalled replication forks. Stimulated by both ss and dsDNA. Unwinds both leading and lagging strands in replication fork structures, unlike orthologs in P.furiosus and M.thermautotrophicus which only unwind the lagging strand and only have 3'-5' helicase activity. Preferentially binds dsDNA with overhangs or branched DNA. Able to anneal DNA substrates that could form a replication fork-like structure, has replication fork reversal activity (at least in vitro). This Sulfurisphaera tokodaii (strain DSM 16993 / JCM 10545 / NBRC 100140 / 7) (Sulfolobus tokodaii) protein is ATP-dependent DNA helicase Hel308.